A 560-amino-acid polypeptide reads, in one-letter code: Bifunctional NAD(P)H-hydrate repair enzyme (560 aa).

The tract at residues 1-241 (MLSRLSERCT…WMTAPERMRV (241 aa)) is NAD(P)H-hydrate epimerase. In terms of domain architecture, YjeF N-terminal spans 29 to 235 (LRDAEPAAAA…SLGLEDWMTA (207 aa)). The segment at 77 to 81 (NNGGD) is NADPHX 1; for epimerase activity. The K(+) site is built by N78 and D145. The segment at 149-155 (GTGICGP) is NADPHX 1; for epimerase activity. 2 residues coordinate (6S)-NADPHX: Y160 and D178. Residue S181 participates in K(+) binding. In terms of domain architecture, YjeF C-terminal spans 249–547 (LDDVYEYFGI…HRVPLIVNAS (299 aa)). Residues 249 to 560 (LDDVYEYFGI…PASRQRPSGQ (312 aa)) are ADP-dependent (S)-NAD(P)H-hydrate dehydratase. G351 is a (6S)-NADPHX binding site. Positions 417–423 (HPGEAAR) are NADPHX 2; for dehydratase activity. Residues 454-458 (KGPGT) and 475-484 (NAGMASGGMG) contribute to the ADP site. Residue D485 coordinates (6S)-NADPHX.

It in the N-terminal section; belongs to the NnrE/AIBP family. In the C-terminal section; belongs to the NnrD/CARKD family. It depends on K(+) as a cofactor.

The catalysed reaction is (6S)-NADHX + ADP = AMP + phosphate + NADH + H(+). The enzyme catalyses (6S)-NADPHX + ADP = AMP + phosphate + NADPH + H(+). It catalyses the reaction (6R)-NADHX = (6S)-NADHX. It carries out the reaction (6R)-NADPHX = (6S)-NADPHX. Its function is as follows. Bifunctional enzyme that catalyzes the epimerization of the S- and R-forms of NAD(P)HX and the dehydration of the S-form of NAD(P)HX at the expense of ADP, which is converted to AMP. This allows the repair of both epimers of NAD(P)HX, a damaged form of NAD(P)H that is a result of enzymatic or heat-dependent hydration. The sequence is that of Bifunctional NAD(P)H-hydrate repair enzyme from Leishmania major.